We begin with the raw amino-acid sequence, 161 residues long: Lipoprotein signal peptidase (161 aa).

3 helical membrane passes run 4 to 24 (LLVV…WSKY), 61 to 81 (KMIF…YLLI), and 87 to 107 (SIWY…NFID). Residues aspartate 116 and aspartate 132 contribute to the active site. The chain crosses the membrane as a helical span at residues 127 to 147 (IFNVADSTLVVGVICIFIYLI).

It belongs to the peptidase A8 family.

It is found in the cell membrane. It carries out the reaction Release of signal peptides from bacterial membrane prolipoproteins. Hydrolyzes -Xaa-Yaa-Zaa-|-(S,diacylglyceryl)Cys-, in which Xaa is hydrophobic (preferably Leu), and Yaa (Ala or Ser) and Zaa (Gly or Ala) have small, neutral side chains.. Its pathway is protein modification; lipoprotein biosynthesis (signal peptide cleavage). Its function is as follows. This protein specifically catalyzes the removal of signal peptides from prolipoproteins. The polypeptide is Lipoprotein signal peptidase (Enterococcus faecalis (strain ATCC 700802 / V583)).